Reading from the N-terminus, the 578-residue chain is uncharacterized protein (578 aa).

This is an uncharacterized protein from Eikenella corrodens.